Here is an 833-residue protein sequence, read N- to C-terminus: Probable serine/threonine-protein kinase DDB_G0277165 (833 aa).

The Protein kinase domain maps to Phe9–Phe262. ATP contacts are provided by residues Leu15 to Val23 and Lys38. Asp133 functions as the Proton acceptor in the catalytic mechanism. The region spanning Gln288–Glu329 is the UBA domain. Over residues Asn338–Ser351 the composition is skewed to basic and acidic residues. Disordered regions lie at residues Asn338–Ser472, Gln528–Ile626, and Phe764–Asn799. 2 stretches are compositionally biased toward low complexity: residues Asn365–Asn432 and Ser441–Ser459. Polar residues predominate over residues Asn460–Ser472. Low complexity predominate over residues Gln528–Ser589. Residues Gly600 to Glu625 are compositionally biased toward polar residues.

It belongs to the protein kinase superfamily. CAMK Ser/Thr protein kinase family.

It carries out the reaction L-seryl-[protein] + ATP = O-phospho-L-seryl-[protein] + ADP + H(+). It catalyses the reaction L-threonyl-[protein] + ATP = O-phospho-L-threonyl-[protein] + ADP + H(+). This is Probable serine/threonine-protein kinase DDB_G0277165 from Dictyostelium discoideum (Social amoeba).